Consider the following 283-residue polypeptide: Alkaline ceramidase (283 aa).

Ca(2+)-binding residues include Asp28, Trp29, Glu31, Asn33, and Glu42. A run of 2 helical transmembrane segments spans residues 43–63 (FVNT…IMLF) and 69–89 (FVTP…LSSM). His92 provides a ligand contact to Zn(2+). 4 helical membrane-spanning segments follow: residues 98–118 (IGQL…FSLF), 134–151 (TFSW…GLSW), 154–174 (PIVN…MLYT), and 187–209 (LGIR…RIFC). 2 residues coordinate Zn(2+): His221 and His225. Residues 222 to 242 (GFWHIFIFIAAYTVLVLFAYF) form a helical membrane-spanning segment.

This sequence belongs to the alkaline ceramidase family. Zn(2+) is required as a cofactor. Expressed in the central midgut of late embryos. In brain, it is present at the interhemispheric junction and in groups of cells in the central brain.

The protein localises to the membrane. It carries out the reaction an N-acylsphing-4-enine + H2O = sphing-4-enine + a fatty acid. Functionally, hydrolyzes the sphingolipid ceramide into sphingosine and free fatty acid. This chain is Alkaline ceramidase (bwa), found in Drosophila melanogaster (Fruit fly).